Reading from the N-terminus, the 491-residue chain is Ketol-acid reductoisomerase (NADP(+)) (491 aa).

Residues 15–208 form the KARI N-terminal Rossmann domain; it reads AQLGKCRFMG…GGHRAGVLES (194 aa). NADP(+) is bound by residues 45-48, R68, R76, S78, and 108-110; these read CGAQ and DKQ. H132 is an active-site residue. G158 is an NADP(+) binding site. 2 consecutive KARI C-terminal knotted domains span residues 209 to 344 and 345 to 484; these read SFVA…TAPQ and FEGK…MTDM. Mg(2+)-binding residues include D217, E221, E389, and E393. Residue S414 coordinates substrate.

It belongs to the ketol-acid reductoisomerase family. It depends on Mg(2+) as a cofactor.

It carries out the reaction (2R)-2,3-dihydroxy-3-methylbutanoate + NADP(+) = (2S)-2-acetolactate + NADPH + H(+). The enzyme catalyses (2R,3R)-2,3-dihydroxy-3-methylpentanoate + NADP(+) = (S)-2-ethyl-2-hydroxy-3-oxobutanoate + NADPH + H(+). The protein operates within amino-acid biosynthesis; L-isoleucine biosynthesis; L-isoleucine from 2-oxobutanoate: step 2/4. It participates in amino-acid biosynthesis; L-valine biosynthesis; L-valine from pyruvate: step 2/4. Involved in the biosynthesis of branched-chain amino acids (BCAA). Catalyzes an alkyl-migration followed by a ketol-acid reduction of (S)-2-acetolactate (S2AL) to yield (R)-2,3-dihydroxy-isovalerate. In the isomerase reaction, S2AL is rearranged via a Mg-dependent methyl migration to produce 3-hydroxy-3-methyl-2-ketobutyrate (HMKB). In the reductase reaction, this 2-ketoacid undergoes a metal-dependent reduction by NADPH to yield (R)-2,3-dihydroxy-isovalerate. This Salmonella schwarzengrund (strain CVM19633) protein is Ketol-acid reductoisomerase (NADP(+)).